Reading from the N-terminus, the 279-residue chain is Thymidylate synthase (279 aa).

A dUMP-binding site is contributed by 133–134 (RR). Cys154 acts as the Nucleophile in catalysis. DUMP contacts are provided by residues 178–181 (RSND), Asn189, and 219–221 (HIY). Asp181 is a binding site for (6R)-5,10-methylene-5,6,7,8-tetrahydrofolate. Ala278 is a (6R)-5,10-methylene-5,6,7,8-tetrahydrofolate binding site.

This sequence belongs to the thymidylate synthase family. Bacterial-type ThyA subfamily. Homodimer.

It is found in the cytoplasm. The catalysed reaction is dUMP + (6R)-5,10-methylene-5,6,7,8-tetrahydrofolate = 7,8-dihydrofolate + dTMP. Its pathway is pyrimidine metabolism; dTTP biosynthesis. Functionally, catalyzes the reductive methylation of 2'-deoxyuridine-5'-monophosphate (dUMP) to 2'-deoxythymidine-5'-monophosphate (dTMP) while utilizing 5,10-methylenetetrahydrofolate (mTHF) as the methyl donor and reductant in the reaction, yielding dihydrofolate (DHF) as a by-product. This enzymatic reaction provides an intracellular de novo source of dTMP, an essential precursor for DNA biosynthesis. The polypeptide is Thymidylate synthase (Streptococcus sanguinis (strain SK36)).